A 167-amino-acid polypeptide reads, in one-letter code: Small ribosomal subunit protein uS9 (167 aa).

The tract at residues 136-167 is disordered; it reads KRAGFLTRDPRATERKKYGLKKARKAPQYSKR. The segment covering 143–152 has biased composition (basic and acidic residues); the sequence is RDPRATERKK. Residues 153-167 are compositionally biased toward basic residues; it reads YGLKKARKAPQYSKR.

This sequence belongs to the universal ribosomal protein uS9 family.

In Nocardia farcinica (strain IFM 10152), this protein is Small ribosomal subunit protein uS9.